A 468-amino-acid chain; its full sequence is ATP synthase subunit beta 1 (468 aa).

Residue 151–158 (GGAGVGKT) participates in ATP binding.

This sequence belongs to the ATPase alpha/beta chains family. As to quaternary structure, F-type ATPases have 2 components, CF(1) - the catalytic core - and CF(0) - the membrane proton channel. CF(1) has five subunits: alpha(3), beta(3), gamma(1), delta(1), epsilon(1). CF(0) has three main subunits: a(1), b(2) and c(9-12). The alpha and beta chains form an alternating ring which encloses part of the gamma chain. CF(1) is attached to CF(0) by a central stalk formed by the gamma and epsilon chains, while a peripheral stalk is formed by the delta and b chains.

Its subcellular location is the cell inner membrane. The catalysed reaction is ATP + H2O + 4 H(+)(in) = ADP + phosphate + 5 H(+)(out). In terms of biological role, produces ATP from ADP in the presence of a proton gradient across the membrane. The catalytic sites are hosted primarily by the beta subunits. This chain is ATP synthase subunit beta 1, found in Photobacterium profundum (strain SS9).